The chain runs to 312 residues: MSVLNNSEVKLFLLIGIPGLEHAHIWFSIPICLMYLLAIMGNCTILFIIKTEPSLHEPMYYFLAMLAVSDMGLSLSSLPTMLRVFLFNAMGISPNACFAQEFFIHGFTVMESSVLLIMSLDRFLAIHNPLRYSSILTSNRVAKMGLILAIRSILLVIPFPFTLRRLKYCQKNLLSHSYCLHQDTMKLACSDNKTNVIYGFFIALCTMLDLALIVLSYVLILKTILSIASLAERLKALNTCVSHICAVLTFYVPIITLAAMHHFAKHKSPLVVILIADMFLLVPPLMNPIVYCVKTRQIWEKILGKLLNVCGR.

Over M1–I25 the chain is Extracellular. Residue N5 is glycosylated (N-linked (GlcNAc...) asparagine). The chain crosses the membrane as a helical span at residues W26–L46. Residues F47–S54 lie on the Cytoplasmic side of the membrane. The chain crosses the membrane as a helical span at residues L55 to L75. The Extracellular segment spans residues S76–A99. Cysteines 97 and 189 form a disulfide. Residues Q100–L120 form a helical membrane-spanning segment. Topologically, residues D121 to N139 are cytoplasmic. The helical transmembrane segment at R140–P160 threads the bilayer. Residues F161–V196 are Extracellular-facing. N192 is a glycosylation site (N-linked (GlcNAc...) asparagine). The helical transmembrane segment at I197 to S216 threads the bilayer. At Y217–A236 the chain is on the cytoplasmic side. Residues L237–L257 traverse the membrane as a helical segment. The Extracellular portion of the chain corresponds to A258 to V272. A helical transmembrane segment spans residues I273–V293. Over K294–R312 the chain is Cytoplasmic.

This sequence belongs to the G-protein coupled receptor 1 family.

It localises to the cell membrane. Its function is as follows. Odorant receptor. The sequence is that of Olfactory receptor 51A7 (OR51A7) from Homo sapiens (Human).